A 156-amino-acid chain; its full sequence is Small ribosomal subunit protein uS7 (156 aa).

It belongs to the universal ribosomal protein uS7 family. In terms of assembly, part of the 30S ribosomal subunit. Contacts proteins S9 and S11.

In terms of biological role, one of the primary rRNA binding proteins, it binds directly to 16S rRNA where it nucleates assembly of the head domain of the 30S subunit. Is located at the subunit interface close to the decoding center, probably blocks exit of the E-site tRNA. The sequence is that of Small ribosomal subunit protein uS7 from Shewanella baltica (strain OS223).